The primary structure comprises 302 residues: Dihydroorotate dehydrogenase B (NAD(+)), catalytic subunit (302 aa).

Residues serine 20 and 44-45 (KG) contribute to the FMN site. Substrate-binding positions include lysine 44 and 68 to 72 (NSVGL). FMN-binding residues include asparagine 98 and asparagine 125. Substrate is bound at residue asparagine 125. Catalysis depends on cysteine 128, which acts as the Nucleophile. FMN-binding residues include lysine 163 and isoleucine 189. Residue 190–191 (NT) coordinates substrate. Residues glycine 215, 241-242 (GG), and 263-264 (GT) contribute to the FMN site.

This sequence belongs to the dihydroorotate dehydrogenase family. Type 1 subfamily. Heterotetramer of 2 PyrK and 2 PyrD type B subunits. FMN is required as a cofactor.

It localises to the cytoplasm. The catalysed reaction is (S)-dihydroorotate + NAD(+) = orotate + NADH + H(+). The protein operates within pyrimidine metabolism; UMP biosynthesis via de novo pathway; orotate from (S)-dihydroorotate (NAD(+) route): step 1/1. Catalyzes the conversion of dihydroorotate to orotate with NAD(+) as electron acceptor. This chain is Dihydroorotate dehydrogenase B (NAD(+)), catalytic subunit (pyrD), found in Thermoanaerobacter pseudethanolicus (strain ATCC 33223 / 39E) (Clostridium thermohydrosulfuricum).